Here is a 523-residue protein sequence, read N- to C-terminus: 2-isopropylmalate synthase (523 aa).

The region spanning 5-267 (VIIFDTTLRD…HTNINHHEIW (263 aa)) is the Pyruvate carboxyltransferase domain. Residues aspartate 14, histidine 202, histidine 204, and asparagine 238 each contribute to the Mn(2+) site. The segment at 392–523 (RLDYFSVQSG…QNKENNKETV (132 aa)) is regulatory domain.

Belongs to the alpha-IPM synthase/homocitrate synthase family. LeuA type 1 subfamily. Homodimer. Mn(2+) is required as a cofactor.

Its subcellular location is the cytoplasm. It catalyses the reaction 3-methyl-2-oxobutanoate + acetyl-CoA + H2O = (2S)-2-isopropylmalate + CoA + H(+). It participates in amino-acid biosynthesis; L-leucine biosynthesis; L-leucine from 3-methyl-2-oxobutanoate: step 1/4. Its function is as follows. Catalyzes the condensation of the acetyl group of acetyl-CoA with 3-methyl-2-oxobutanoate (2-ketoisovalerate) to form 3-carboxy-3-hydroxy-4-methylpentanoate (2-isopropylmalate). This chain is 2-isopropylmalate synthase, found in Klebsiella pneumoniae (strain 342).